The following is a 182-amino-acid chain: ATP-dependent protease subunit HslV (182 aa).

Residue Thr12 is part of the active site. 3 residues coordinate Na(+): Ala167, Cys170, and Thr173.

It belongs to the peptidase T1B family. HslV subfamily. A double ring-shaped homohexamer of HslV is capped on each side by a ring-shaped HslU homohexamer. The assembly of the HslU/HslV complex is dependent on binding of ATP.

The protein resides in the cytoplasm. It catalyses the reaction ATP-dependent cleavage of peptide bonds with broad specificity.. Allosterically activated by HslU binding. In terms of biological role, protease subunit of a proteasome-like degradation complex believed to be a general protein degrading machinery. The polypeptide is ATP-dependent protease subunit HslV (Paramagnetospirillum magneticum (strain ATCC 700264 / AMB-1) (Magnetospirillum magneticum)).